The chain runs to 929 residues: Isoleucine--tRNA ligase (929 aa).

The 'HIGH' region motif lies at 58–68 (PYANGDIHIGH). Glutamate 563 contributes to the L-isoleucyl-5'-AMP binding site. The 'KMSKS' region motif lies at 605 to 609 (KMSKS). Residue lysine 608 coordinates ATP. Residues cysteine 892, cysteine 895, cysteine 912, and cysteine 915 each coordinate Zn(2+).

Belongs to the class-I aminoacyl-tRNA synthetase family. IleS type 1 subfamily. As to quaternary structure, monomer. The cofactor is Zn(2+).

It localises to the cytoplasm. It carries out the reaction tRNA(Ile) + L-isoleucine + ATP = L-isoleucyl-tRNA(Ile) + AMP + diphosphate. Catalyzes the attachment of isoleucine to tRNA(Ile). As IleRS can inadvertently accommodate and process structurally similar amino acids such as valine, to avoid such errors it has two additional distinct tRNA(Ile)-dependent editing activities. One activity is designated as 'pretransfer' editing and involves the hydrolysis of activated Val-AMP. The other activity is designated 'posttransfer' editing and involves deacylation of mischarged Val-tRNA(Ile). The polypeptide is Isoleucine--tRNA ligase (Neisseria meningitidis serogroup B (strain ATCC BAA-335 / MC58)).